A 191-amino-acid chain; its full sequence is ECF RNA polymerase sigma factor ShbA (191 aa).

The interval 27-98 (LLAHVHPLAL…HKVADLQRAA (72 aa)) is sigma-70 factor domain-2. The tract at residues 100–122 (RHPGSTAVPSDEMPERPDDSLGP) is disordered. Positions 112–122 (MPERPDDSLGP) are enriched in basic and acidic residues. The interval 138–187 (LLANLPENQRELLVLRVAVGLTAEETGQMLGMSPGAVRVAQHRALSRLRA) is sigma-70 factor domain-4. A DNA-binding region (H-T-H motif) is located at residues 160-179 (AEETGQMLGMSPGAVRVAQH).

The protein belongs to the sigma-70 factor family. ECF subfamily.

Sigma factors are initiation factors that promote the attachment of RNA polymerase to specific initiation sites and are then released. Extracytoplasmic function (ECF) sigma factors are held in an inactive form by an anti-sigma factor until released. This alternative sigma factor governs the transcription of the principal sigma factor HrdB (SigA) throughout growth. Acts by binding to the promoter region. This is ECF RNA polymerase sigma factor ShbA from Streptomyces griseus subsp. griseus (strain JCM 4626 / CBS 651.72 / NBRC 13350 / KCC S-0626 / ISP 5235).